A 341-amino-acid chain; its full sequence is Chitin synthase 3 complex protein CSI2 (341 aa).

Positions 35–70 (SSSTKAADSSSKGSSSAKTTTSLGKSSVTSKDVSSS) are enriched in low complexity. 3 disordered regions span residues 35-78 (SSST…SSTK), 272-291 (DSLSSTPREPGATQILGKFT), and 298-341 (NYTS…DGKE).

Functionally, appears to be a structural component of the chitin synthase 3 complex. The polypeptide is Chitin synthase 3 complex protein CSI2 (CSI2) (Saccharomyces cerevisiae (strain ATCC 204508 / S288c) (Baker's yeast)).